A 238-amino-acid chain; its full sequence is CBS domain-containing protein CBSX2, chloroplastic (238 aa).

The transit peptide at 1-71 directs the protein to the chloroplast; that stretch reads MGSISLSNSM…ASVNNNNSVP (71 aa). CBS domains follow at residues 83-145 and 177-234; these read MTPR…QNDT and MTPS…KRET.

It is found in the plastid. Its subcellular location is the chloroplast stroma. This is CBS domain-containing protein CBSX2, chloroplastic (CBSX2) from Arabidopsis thaliana (Mouse-ear cress).